A 466-amino-acid chain; its full sequence is Argininosuccinate lyase (466 aa).

It belongs to the lyase 1 family. Argininosuccinate lyase subfamily.

It is found in the cytoplasm. It carries out the reaction 2-(N(omega)-L-arginino)succinate = fumarate + L-arginine. Its pathway is amino-acid biosynthesis; L-arginine biosynthesis; L-arginine from L-ornithine and carbamoyl phosphate: step 3/3. This Microcystis aeruginosa (strain NIES-843 / IAM M-2473) protein is Argininosuccinate lyase.